The chain runs to 708 residues: O-antigen chain terminator bifunctional methyltransferase/kinase WbdD (708 aa).

Positions 1–210 are methyltransferase; it reads MTKDLNTLVS…VPRPMYLVSN (210 aa). S-adenosyl-L-methionine is bound by residues 16-17, Arg-36, Gly-61, 82-87, 108-111, and Leu-128; these read YQ, DFQQEN, and GRIE. A kinase region spans residues 211–459; sequence HRVLINDFNQ…AKLPSAEQQR (249 aa). ATP-binding positions include Pro-229, His-237, 241–243, Lys-252, Glu-274, 309–311, Met-358, and Asp-369; these read RRY and EKL. Residues 485-594 adopt a coiled-coil conformation; sequence AGSEALRGQI…EIEKIHRSRS (110 aa). Residues 601-669 form a required for membrane-binding region; that stretch reads YRYLGLQIHL…RLYRRMNPLP (69 aa). The required for localizing WbdA to the membrane stretch occupies residues 687–708; it reads VMHPELLPPEVYEIYLKLTKNK.

Belongs to the WbdD family. Interacts with WbdA.

Its subcellular location is the cell inner membrane. The enzyme catalyses 3-O-phospho-alpha-D-Man-(1-&gt;2)-alpha-D-Man-(1-&gt;2)-[alpha-D-Man-(1-&gt;3)-alpha-D-Man-(1-&gt;3)-alpha-D-Man-(1-&gt;2)-alpha-D-Man-(1-&gt;2)](n)-alpha-D-Man-(1-&gt;3)-alpha-D-Man-(1-&gt;3)-alpha-D-Man-(1-&gt;3)-alpha-D-GlcNAc-di-trans,octa-cis-undecaprenyl diphosphate + S-adenosyl-L-methionine = 3-O-methylphospho-alpha-D-Man-(1-&gt;2)-alpha-D-Man-(1-&gt;2)-[alpha-D-Man-(1-&gt;3)-alpha-D-Man-(1-&gt;3)-alpha-D-Man-(1-&gt;2)-alpha-D-Man-(1-&gt;2)](n)-alpha-D-Man-(1-&gt;3)-alpha-D-Man-(1-&gt;3)-alpha-D-Man-(1-&gt;3)-alpha-D-GlcNAc-di-trans,octa-cis-undecaprenyl diphosphate + S-adenosyl-L-homocysteine. It carries out the reaction alpha-D-Man-(1-&gt;2)-alpha-D-Man-(1-&gt;2)-[alpha-D-Man-(1-&gt;3)-alpha-D-Man-(1-&gt;3)-alpha-D-Man-(1-&gt;2)-alpha-D-Man-(1-&gt;2)](n)-alpha-D-Man-(1-&gt;3)-alpha-D-Man-(1-&gt;3)-alpha-D-Man-(1-&gt;3)-alpha-D-GlcNAc-di-trans,octa-cis-undecaprenyl diphosphate + ATP = 3-O-phospho-alpha-D-Man-(1-&gt;2)-alpha-D-Man-(1-&gt;2)-[alpha-D-Man-(1-&gt;3)-alpha-D-Man-(1-&gt;3)-alpha-D-Man-(1-&gt;2)-alpha-D-Man-(1-&gt;2)](n)-alpha-D-Man-(1-&gt;3)-alpha-D-Man-(1-&gt;3)-alpha-D-Man-(1-&gt;3)-alpha-D-GlcNAc-di-trans,octa-cis-undecaprenyl diphosphate + ADP + H(+). The protein operates within bacterial outer membrane biogenesis; LPS O-antigen biosynthesis. Regulates the length of the LPS O-antigen polysaccharide chain. Stops the polymerization of the chain by phosphorylating and then methylating the phosphate on the terminal sugar. This terminal modification is essential for export of the O-antigen across the inner membrane. WbdD is also required for correct localization of the WbdA mannosyltransferase. This Escherichia coli protein is O-antigen chain terminator bifunctional methyltransferase/kinase WbdD.